The primary structure comprises 329 residues: Acetoacetyl CoA synthase NphT7 (329 aa).

Residues Cys115, His256, and Asn286 contribute to the active site.

The protein belongs to the thiolase-like superfamily. FabH family. As to quaternary structure, homodimer.

The protein resides in the cytoplasm. The enzyme catalyses malonyl-CoA + acetyl-CoA + H(+) = acetoacetyl-CoA + CO2 + CoA. It functions in the pathway metabolic intermediate biosynthesis; (R)-mevalonate biosynthesis. Its function is as follows. Catalyzes the condensation of acetyl-CoA and malonyl-CoA to form acetoacetyl-CoA and CoA. Does not accept malonyl-[acyl-carrier-protein] as a substrate. Can also convert malonyl-CoA into acetyl-CoA via decarboxylation of malonyl-CoA. This Streptomyces sp. (strain CL190) protein is Acetoacetyl CoA synthase NphT7 (nphT7).